The chain runs to 383 residues: Chaperone protein DnaJ (383 aa).

Residues 5–70 (DYYEALGVAR…QKRAAYDQFG (66 aa)) enclose the J domain. The CR-type zinc-finger motif lies at 139–217 (GTEVQIRVPT…CGGRGRVQSQ (79 aa)). Zn(2+)-binding residues include cysteine 152, cysteine 155, cysteine 169, cysteine 172, cysteine 191, cysteine 194, cysteine 205, and cysteine 208. CXXCXGXG motif repeat units lie at residues 152-159 (CDACDGKG), 169-176 (CPTCKGHG), 191-198 (CPRCGGSG), and 205-212 (CRKCGGRG). The tract at residues 230–249 (TGDRIRLSGEGEPGENGGPP) is disordered.

This sequence belongs to the DnaJ family. Homodimer. It depends on Zn(2+) as a cofactor.

It is found in the cytoplasm. Functionally, participates actively in the response to hyperosmotic and heat shock by preventing the aggregation of stress-denatured proteins and by disaggregating proteins, also in an autonomous, DnaK-independent fashion. Unfolded proteins bind initially to DnaJ; upon interaction with the DnaJ-bound protein, DnaK hydrolyzes its bound ATP, resulting in the formation of a stable complex. GrpE releases ADP from DnaK; ATP binding to DnaK triggers the release of the substrate protein, thus completing the reaction cycle. Several rounds of ATP-dependent interactions between DnaJ, DnaK and GrpE are required for fully efficient folding. Also involved, together with DnaK and GrpE, in the DNA replication of plasmids through activation of initiation proteins. This Alkalilimnicola ehrlichii (strain ATCC BAA-1101 / DSM 17681 / MLHE-1) protein is Chaperone protein DnaJ.